Reading from the N-terminus, the 276-residue chain is Extracellular metalloprotease VDBG_07883 (276 aa).

Positions 1-17 (MQSKFLWIAAASAATAA) are cleaved as a signal peptide. Residues Asn-70 and Asn-102 are each glycosylated (N-linked (GlcNAc...) asparagine). His-191 contacts Zn(2+). Residue Glu-192 is part of the active site. His-195 is a Zn(2+) binding site. The N-linked (GlcNAc...) asparagine glycan is linked to Asn-222. Residues Cys-227 and Cys-254 are joined by a disulfide bond.

This sequence belongs to the peptidase M43B family.

Its subcellular location is the secreted. In terms of biological role, secreted metalloproteinase that allows assimilation of proteinaceous substrates. The protein is Extracellular metalloprotease VDBG_07883 of Verticillium alfalfae (strain VaMs.102 / ATCC MYA-4576 / FGSC 10136) (Verticillium wilt of alfalfa).